Reading from the N-terminus, the 415-residue chain is L-cysteine:1D-myo-inositol 2-amino-2-deoxy-alpha-D-glucopyranoside ligase 2 (415 aa).

Cys-44 is a binding site for Zn(2+). Residues 44–47 (CGIT), Thr-59, and 82–84 (NIT) contribute to the L-cysteinyl-5'-AMP site. Positions 46–56 (ITPYDSTHLGH) match the 'HIGH' region motif. A 'ERGGDP' region motif is present at residues 188 to 193 (ERGGDP). Trp-228 provides a ligand contact to L-cysteinyl-5'-AMP. Zn(2+) is bound at residue Cys-232. 250 to 252 (GSD) serves as a coordination point for L-cysteinyl-5'-AMP. A Zn(2+)-binding site is contributed by His-257. Residue Ile-284 participates in L-cysteinyl-5'-AMP binding. Residues 290–294 (KMSKS) carry the 'KMSKS' region motif.

The protein belongs to the class-I aminoacyl-tRNA synthetase family. MshC subfamily. In terms of assembly, monomer. The cofactor is Zn(2+).

It carries out the reaction 1D-myo-inositol 2-amino-2-deoxy-alpha-D-glucopyranoside + L-cysteine + ATP = 1D-myo-inositol 2-(L-cysteinylamino)-2-deoxy-alpha-D-glucopyranoside + AMP + diphosphate + H(+). Its function is as follows. Catalyzes the ATP-dependent condensation of GlcN-Ins and L-cysteine to form L-Cys-GlcN-Ins. This Corynebacterium jeikeium (strain K411) protein is L-cysteine:1D-myo-inositol 2-amino-2-deoxy-alpha-D-glucopyranoside ligase 2.